Reading from the N-terminus, the 558-residue chain is uncharacterized protein (558 aa).

Positions 531–558 are disordered; sequence NEDDGTSASPTAMTFDMPPEHPFYSHYR.

This is an uncharacterized protein from Saccharomyces cerevisiae (strain ATCC 204508 / S288c) (Baker's yeast).